The chain runs to 475 residues: Glutamate--tRNA ligase 2 (475 aa).

The short motif at 11 to 21 (PSPTGFLHIGG) is the 'HIGH' region element. Over residues 116-133 (AEGRPPRYDGTWRDKDPA) the composition is skewed to basic and acidic residues. Residues 116-137 (AEGRPPRYDGTWRDKDPAEAPS) are disordered. Positions 240–244 (KLSKR) match the 'KMSKS' region motif. Lys-243 contacts ATP.

It belongs to the class-I aminoacyl-tRNA synthetase family. Glutamate--tRNA ligase type 1 subfamily. In terms of assembly, monomer.

It localises to the cytoplasm. The enzyme catalyses tRNA(Glu) + L-glutamate + ATP = L-glutamyl-tRNA(Glu) + AMP + diphosphate. Functionally, catalyzes the attachment of glutamate to tRNA(Glu) in a two-step reaction: glutamate is first activated by ATP to form Glu-AMP and then transferred to the acceptor end of tRNA(Glu). The protein is Glutamate--tRNA ligase 2 of Chelativorans sp. (strain BNC1).